We begin with the raw amino-acid sequence, 1170 residues long: Thrombospondin-1 (1170 aa).

The N-terminal stretch at 1–18 (MGLAWGLGVLLLLHACGS) is a signal peptide. The tract at residues 47–95 (RLVKGPDPSSPAFRIEDANLIPPVPDKKFQDLVDAVRAEKGFLLLASLR) is heparin-binding. Residues 65-270 (NLIPPVPDKK…HKTKDLQAIC (206 aa)) enclose the Laminin G-like domain. The cysteines at positions 171 and 232 are disulfide-linked. N-linked (GlcNAc...) asparagine glycans are attached at residues N248 and N360. A VWFC domain is found at 316–373 (PLCYHNGVQYRTGDEWTVDSCTECRCQNSVTICKKVSCPIMPCSNATVPDGECCPRCW). 3 TSP type-1 domains span residues 379-429 (DDGW…QECD), 435-490 (DGGW…DSCP), and 492-547 (NGGW…QDCP). Intrachain disulfides connect C391–C423, C395–C428, C406–C413, C447–C484, C451–C489, C462–C474, C504–C541, C508–C546, C519–C531, C551–C562, C556–C572, C575–C586, C592–C608, C599–C617, C620–C644, C650–C663, C657–C676, C678–C689, C705–C713, C718–C738, C754–C774, C777–C797, C813–C833, C836–C856, C874–C894, C910–C930, and C946–C1167. The region spanning 547-587 (PIDGCLSNPCFAGVQCTSYPDGSWKCGACPPGYSGDGVECK) is the EGF-like 1 domain. S553 carries O-linked (Xyl) serine glycosylation. The region spanning 646-690 (PRNPCTDGTHDCNKNAKCNYLGHYSDPMYRCECKPGYAGNGIICG) is the EGF-like 2 domain. TSP type-3 repeat units follow at residues 691 to 726 (EDTD…NSGQ), 727 to 762 (EDYD…NPAQ), 763 to 785 (YDYD…NPDQ), 786 to 821 (ADTD…NVDQ), 822 to 844 (KDTD…NPDQ), 845 to 882 (LDSD…NANQ), 883 to 918 (ADHD…NPDQ), and 919 to 954 (KDSD…DISE). The N-linked (GlcNAc...) asparagine glycan is linked to N708. A disordered region spans residues 839–944 (EHNPDQLDSD…DQDKVPDIDD (106 aa)). Basic and acidic residues-rich tracts occupy residues 840–854 (HNPD…RIGD), 883–894 (ADHDKDGKGDAC), and 917–941 (DQKD…KVPD). The short motif at 926–928 (RGD) is the Cell attachment site element. In terms of domain architecture, TSP C-terminal spans 958-1170 (RRFQMIPLDP…SDLKYECRDS (213 aa)). N1067 and N1085 each carry an N-linked (GlcNAc...) asparagine glycan.

This sequence belongs to the thrombospondin family. Homotrimer; disulfide-linked. Can bind to fibrinogen, fibronectin, laminin, type V collagen and integrins alpha-V/beta-1, alpha-V/beta-3 and alpha-IIb/beta-3. Binds heparin. Interacts (via the C-terminal domain) with CD47. Interacts (via the TSP type I repeats) with CD36; the interaction conveys an antiangiogenic effect. Interacts (via the TSP type I repeats) with HRG; the interaction blocks the antiangiogenic effect of THBS1 with CD36. Interacts with ATF6 (via lumenal domain). Interacts with FN1; this interaction is enhanced by TNFAIP6, which may act as a bridging molecule between FN1 and THBS1. Interacts with SIRPA; the interaction stimulates phosphorylation of SIRPA. Odontoblasts.

Its subcellular location is the secreted. The protein localises to the cell surface. It localises to the extracellular space. The protein resides in the extracellular matrix. It is found in the endoplasmic reticulum. Its subcellular location is the sarcoplasmic reticulum. In terms of biological role, adhesive glycoprotein that mediates cell-to-cell and cell-to-matrix interactions. Multifunctional, involved in inflammation, angiogenesis, wound healing, reactive oxygen species (ROS) signaling, nitrous oxide (NO) signaling, apoptosis, senescence, aging, cellular self-renewal, stemness, and cardiovascular and metabolic homeostasis. Negatively modulates dendritic cell activation and cytokine release, as part of an autocrine feedback loop, contributing to the resolution of inflammation and immune homeostasis. Ligand for receptor CD47. Modulates nitrous oxide (NO) signaling via CD47, hence playing a role as a pressor agent, supporting blood pressure. Plays a role in endothelial cell senescence, acting via CD47, by increasing the abundance and activation of NADPH oxidase NOX1, and so generating excess ROS. Inhibits stem cell self-renewal, acting via CD47 signaling, probably by regulation of the stem cell transcription factors POU5F1/OCT4, SOX2, MYC/c-Myc and KLF4. Negatively modulates wound healing, acting via CD47. Ligand for receptor CD36. Involved in inducing apoptosis in podocytes in response to elevated free fatty acids, acting via CD36. Plays a role in suppressing angiogenesis, acting, depending on context, via CD36 or CD47. Promotes cellular senescence in a TP53-CDKN1A-RB1 signaling-dependent manner. Ligand for immunoglobulin-like cell surface receptor SIRPA. Involved in ROS signaling in non-phagocytic cells, stimulating NADPH oxidase-derived ROS production, acting via interaction with SIRPA. Plays a role in metabolic dysfunction in diet-induced obesity, perhaps acting by exacerbating adipose inflammatory activity; its effects may be mediated, at least in part, through enhanced adipocyte proliferation. Plays a role in ER stress response, via its interaction with the activating transcription factor 6 alpha (ATF6) which produces adaptive ER stress response factors. May be involved in age-related conditions, including metabolic dysregulation, during normal aging. The sequence is that of Thrombospondin-1 (THBS1) from Bos taurus (Bovine).